Consider the following 215-residue polypeptide: Pyrrolidone-carboxylate peptidase (215 aa).

Catalysis depends on residues E80, C143, and H167.

This sequence belongs to the peptidase C15 family. Homotetramer.

The protein resides in the cytoplasm. It catalyses the reaction Release of an N-terminal pyroglutamyl group from a polypeptide, the second amino acid generally not being Pro.. Removes 5-oxoproline from various penultimate amino acid residues except L-proline. The sequence is that of Pyrrolidone-carboxylate peptidase from Bacillus cereus (strain ATCC 14579 / DSM 31 / CCUG 7414 / JCM 2152 / NBRC 15305 / NCIMB 9373 / NCTC 2599 / NRRL B-3711).